The sequence spans 340 residues: Phosphoribosylformylglycinamidine cyclo-ligase (340 aa).

This sequence belongs to the AIR synthase family.

The protein localises to the cytoplasm. The enzyme catalyses 2-formamido-N(1)-(5-O-phospho-beta-D-ribosyl)acetamidine + ATP = 5-amino-1-(5-phospho-beta-D-ribosyl)imidazole + ADP + phosphate + H(+). It participates in purine metabolism; IMP biosynthesis via de novo pathway; 5-amino-1-(5-phospho-D-ribosyl)imidazole from N(2)-formyl-N(1)-(5-phospho-D-ribosyl)glycinamide: step 2/2. In Crocosphaera subtropica (strain ATCC 51142 / BH68) (Cyanothece sp. (strain ATCC 51142)), this protein is Phosphoribosylformylglycinamidine cyclo-ligase.